The primary structure comprises 440 residues: COP9 signalosome complex subunit 5 (440 aa).

An MPN domain is found at 71–218 (VLISKLSCEK…MGAFRTIESK (148 aa)). The Zn(2+) site is built by histidine 164, histidine 166, and aspartate 177. The JAMM motif motif lies at 164-177 (HSHPGYDCWLSNID). Residues 319–341 (TQRGDSTETSSFGSMFSGDNTSD) are compositionally biased toward polar residues. 2 disordered regions span residues 319 to 343 (TQRGDSTETSSFGSMFSGDNTSDVD) and 376 to 400 (SRSTDNFHNSKKRMNSNQEKCHDEG).

It belongs to the peptidase M67A family. CSN5 subfamily. Component of a COP9 signalosome-like (CSN) complex, composed of at least RRI1/CSN5, CSN9, RRI2/CSN10, PCI8/CSN11, CSN12 and CSI1. Within this complex it probably interacts directly with CSN12. Also interacts with RPN5. The cofactor is a divalent metal cation.

The protein resides in the cytoplasm. Its subcellular location is the nucleus. Catalytic component of the COP9 signalosome (CSN) complex that acts as an regulator of the ubiquitin (Ubl) conjugation pathway by mediating the deneddylation of the cullin subunit of SCF-type E3 ubiquitin-protein ligase complexes. The CSN complex is involved in the regulation of the mating pheromone response. The sequence is that of COP9 signalosome complex subunit 5 (RRI1) from Saccharomyces cerevisiae (strain YJM789) (Baker's yeast).